We begin with the raw amino-acid sequence, 323 residues long: Ubiquinone biosynthesis protein COQ4, mitochondrial (323 aa).

Zn(2+) contacts are provided by His-205, Asp-206, His-209, and Glu-221.

It belongs to the COQ4 family. As to quaternary structure, component of a multi-subunit COQ enzyme complex, composed of at least COQ3, COQ4, COQ5, COQ6, COQ7 and COQ9. Zn(2+) serves as cofactor.

It localises to the mitochondrion inner membrane. The enzyme catalyses a 4-hydroxy-3-methoxy-5-(all-trans-polyprenyl)benzoate + H(+) = a 2-methoxy-6-(all-trans-polyprenyl)phenol + CO2. It functions in the pathway cofactor biosynthesis; ubiquinone biosynthesis. In terms of biological role, lyase that catalyzes the C1-decarboxylation of 4-hydroxy-3-methoxy-5-(all-trans-polyprenyl)benzoic acid into 2-methoxy-6-(all-trans-polyprenyl)phenol during ubiquinone biosynthesis. The chain is Ubiquinone biosynthesis protein COQ4, mitochondrial from Candida albicans (strain SC5314 / ATCC MYA-2876) (Yeast).